The primary structure comprises 570 residues: High-affinity hexose transporter HXT6 (570 aa).

Topologically, residues methionine 1–serine 60 are cytoplasmic. A helical membrane pass occupies residues alanine 61–tryptophan 81. The Extracellular segment spans residues aspartate 82–glycine 116. Asparagine 91 carries an N-linked (GlcNAc...) asparagine glycan. The helical transmembrane segment at leucine 117–glycine 137 threads the bilayer. Topologically, residues aspartate 138 to lysine 143 are cytoplasmic. A helical transmembrane segment spans residues valine 144–isoleucine 164. Topologically, residues asparagine 165 to arginine 174 are extracellular. A helical membrane pass occupies residues isoleucine 175 to valine 195. The Cytoplasmic portion of the chain corresponds to serine 196–arginine 201. A helical membrane pass occupies residues glycine 202–threonine 222. Residues asparagine 223 to arginine 236 lie on the Extracellular side of the membrane. Residue asparagine 228 is glycosylated (N-linked (GlcNAc...) asparagine). Residues valine 237–proline 257 traverse the membrane as a helical segment. The Cytoplasmic portion of the chain corresponds to glutamate 258–aspartate 340. Residues asparagine 341–serine 357 traverse the membrane as a helical segment. At aspartate 358–serine 363 the chain is on the extracellular side. Residues isoleucine 364–valine 381 form a helical membrane-spanning segment. At glutamate 382–threonine 388 the chain is on the cytoplasmic side. Residues cysteine 389–valine 409 traverse the membrane as a helical segment. Residues threonine 410–valine 431 lie on the Extracellular side of the membrane. The chain crosses the membrane as a helical span at residues phenylalanine 432–valine 452. Topologically, residues serine 453–threonine 469 are cytoplasmic. A helical transmembrane segment spans residues alanine 470–isoleucine 490. Position 491 (asparagine 491) is a topological domain, extracellular. Residues phenylalanine 492–valine 512 form a helical membrane-spanning segment. Over valine 513–lysine 570 the chain is Cytoplasmic. Residue lysine 560 forms a Glycyl lysine isopeptide (Lys-Gly) (interchain with G-Cter in ubiquitin) linkage.

It belongs to the major facilitator superfamily. Sugar transporter (TC 2.A.1.1) family.

The protein resides in the membrane. Its function is as follows. High-affinity glucose transporter. The chain is High-affinity hexose transporter HXT6 (HXT6) from Saccharomyces cerevisiae (strain ATCC 204508 / S288c) (Baker's yeast).